The sequence spans 203 residues: GTP-binding protein YPTC1 (203 aa).

GTP contacts are provided by residues 15–23, 33–40, 63–67, 121–124, and 151–153; these read GDSGVGKSC, YTESYIST, DTAGQ, NKSD, and SAK. Positions 37-45 match the Effector region motif; it reads YISTIGVDF. Positions 174-203 are disordered; that stretch reads ASQPIPTKAGGPVVRPQEGKPINSKSSSCC. 2 S-geranylgeranyl cysteine lipidation sites follow: cysteine 202 and cysteine 203.

Belongs to the small GTPase superfamily. Rab family.

The protein resides in the cell membrane. Its function is as follows. Protein transport. Probably involved in vesicular traffic. The polypeptide is GTP-binding protein YPTC1 (YPTC1) (Chlamydomonas reinhardtii (Chlamydomonas smithii)).